The sequence spans 2407 residues: Daf-12-interacting protein 1 (2407 aa).

The segment covering 90-112 (QNSSMASMSSTPSSGQSSSPRNA) has biased composition (low complexity). Residues 90-152 (QNSSMASMSS…PHLSVQSQQR (63 aa)) form a disordered region. Residues 277 to 335 (CSVHVPHLDRHSPDHYRRRFESYGQVIDVDMVKSNDNKAFAVVQFTNIDDAQKALQDTN) form the RRM domain. 11 disordered regions span residues 439–632 (EVAA…LELD), 737–767 (ATDS…TNRL), 785–849 (LCIG…GRPA), 874–896 (PTHD…ETMV), 921–986 (LIAA…PSNA), 993–1012 (RSQS…TPVV), 1025–1844 (SNQP…EDSE), 1858–1918 (IAQE…VNNH), 1932–1976 (LQPA…QQSD), 2077–2103 (EENE…LAAA), and 2172–2200 (SIQR…VNQN). Over residues 443–456 (RSSSPTSKSENDQG) the composition is skewed to polar residues. The segment covering 512–529 (EDSDEQNDVDEEDDEDVV) has biased composition (acidic residues). 3 stretches are compositionally biased toward basic and acidic residues: residues 530–541 (SEEKRHEPEEGK), 548–564 (GHRD…DSSE), and 573–586 (SHHE…KDSE). Over residues 587–603 (AYQSRSFSPLNYQSQSP) the composition is skewed to polar residues. Residues 618-627 (SPTTSSASSS) show a composition bias toward low complexity. Composition is skewed to polar residues over residues 791 to 826 (TPST…TPRS) and 837 to 849 (SRHN…GRPA). Over residues 924-946 (ATSTGTHSVSSSAHSTPRHSISG) the composition is skewed to polar residues. Positions 966 to 978 (SRPEKVQIRHDTI) are enriched in basic and acidic residues. Residues 1043–1052 (SALQNIQNHQ) show a composition bias toward polar residues. Residues 1053–1070 (PPHSNANSTPSTPSTSTH) are compositionally biased toward low complexity. A compositionally biased stretch (basic and acidic residues) spans 1086-1153 (KEKEEREREA…KVRKKAEKEK (68 aa)). The segment covering 1165–1177 (SDESDSDSNDELD) has biased composition (acidic residues). Basic and acidic residues-rich tracts occupy residues 1178–1195 (LDVR…KDHQ), 1218–1227 (RAHDSFEKMQ), 1279–1293 (ADQR…EKGE), 1304–1320 (NDAG…DREN), 1335–1355 (QGER…DAAA), and 1376–1398 (RRSS…PHED). Composition is skewed to low complexity over residues 1456-1471 (PKHL…TKRS) and 1488-1498 (TTSSTSTATTS). Over residues 1534–1547 (SMNSAADSPMSTTG) the composition is skewed to polar residues. Over residues 1570-1595 (SSSGQHDSSSGSSSDSSSSDGSTSSD) the composition is skewed to low complexity. 2 stretches are compositionally biased toward basic and acidic residues: residues 1679–1691 (SEEH…HGDS) and 1703–1726 (EHQE…HEEQ). Residues 1749–1770 (TQAQEKSAHTLISDQETDQAVQ) show a composition bias toward polar residues. Residues 1792–1805 (NEKEVSGKDPHNIK) show a composition bias toward basic and acidic residues. Positions 1809-1826 (PLNNGHTDLLFSPSSSAH) are enriched in polar residues. 2 stretches are compositionally biased toward basic and acidic residues: residues 1827-1836 (ASEKQSTKSE) and 1873-1892 (EEVK…KMEE). 2 stretches are compositionally biased toward polar residues: residues 1895–1911 (EQTP…SQDT) and 1932–1942 (LQPASQHQVAQ). Over residues 1962 to 1975 (SQQSQPSPMSSQQS) the composition is skewed to low complexity. The stretch at 2049–2110 (NQMMQAKMKQ…AAATAAATMA (62 aa)) forms a coiled coil. Positions 2077 to 2099 (EENERKVEEDRREKQRKEEERQR) are enriched in basic and acidic residues. The span at 2176 to 2186 (PSSTASTSSNP) shows a compositional bias: low complexity. The SPOC domain maps to 2213-2383 (QRWFYKHFPM…TRYLLIVFTN (171 aa)).

As to quaternary structure, isoform d interacts with daf-12. Isoform d is widely expressed: detected in the hypodermis, seam cells, intestine, somatic gonad, neurons, vulval precursors, body wall muscle and pharynx.

Its subcellular location is the nucleus. Its function is as follows. Probable transcriptional corepressor which modulates activity of the nuclear hormone receptor daf-12 to regulate the dauer diapause. The sequence is that of Daf-12-interacting protein 1 from Caenorhabditis elegans.